Consider the following 270-residue polypeptide: Type III pantothenate kinase (270 aa).

16 to 23 (EIGNTTAM) is a binding site for ATP. Residues Tyr106 and 113 to 116 (GADR) contribute to the substrate site. The Proton acceptor role is filled by Asp115. Asp136 serves as a coordination point for K(+). Residue Thr139 participates in ATP binding. Thr191 provides a ligand contact to substrate.

It belongs to the type III pantothenate kinase family. In terms of assembly, homodimer. It depends on NH4(+) as a cofactor. K(+) is required as a cofactor.

The protein localises to the cytoplasm. The enzyme catalyses (R)-pantothenate + ATP = (R)-4'-phosphopantothenate + ADP + H(+). It functions in the pathway cofactor biosynthesis; coenzyme A biosynthesis; CoA from (R)-pantothenate: step 1/5. Its function is as follows. Catalyzes the phosphorylation of pantothenate (Pan), the first step in CoA biosynthesis. The sequence is that of Type III pantothenate kinase from Chlorobium luteolum (strain DSM 273 / BCRC 81028 / 2530) (Pelodictyon luteolum).